A 298-amino-acid chain; its full sequence is Lipoyl synthase (298 aa).

[4Fe-4S] cluster contacts are provided by cysteine 40, cysteine 45, cysteine 51, cysteine 67, cysteine 71, cysteine 74, and serine 280. The region spanning 53–269 (AVRKTATFMI…KEIALSKGFS (217 aa)) is the Radical SAM core domain.

The protein belongs to the radical SAM superfamily. Lipoyl synthase family. [4Fe-4S] cluster is required as a cofactor.

It is found in the cytoplasm. It carries out the reaction [[Fe-S] cluster scaffold protein carrying a second [4Fe-4S](2+) cluster] + N(6)-octanoyl-L-lysyl-[protein] + 2 oxidized [2Fe-2S]-[ferredoxin] + 2 S-adenosyl-L-methionine + 4 H(+) = [[Fe-S] cluster scaffold protein] + N(6)-[(R)-dihydrolipoyl]-L-lysyl-[protein] + 4 Fe(3+) + 2 hydrogen sulfide + 2 5'-deoxyadenosine + 2 L-methionine + 2 reduced [2Fe-2S]-[ferredoxin]. Its pathway is protein modification; protein lipoylation via endogenous pathway; protein N(6)-(lipoyl)lysine from octanoyl-[acyl-carrier-protein]. Catalyzes the radical-mediated insertion of two sulfur atoms into the C-6 and C-8 positions of the octanoyl moiety bound to the lipoyl domains of lipoate-dependent enzymes, thereby converting the octanoylated domains into lipoylated derivatives. In Bacillus cytotoxicus (strain DSM 22905 / CIP 110041 / 391-98 / NVH 391-98), this protein is Lipoyl synthase.